The sequence spans 140 residues: uncharacterized protein (140 aa).

This is an uncharacterized protein from Acanthamoeba polyphaga mimivirus (APMV).